A 462-amino-acid chain; its full sequence is uncharacterized protein (462 aa).

2 helical membrane passes run 12-32 and 257-277; these read WWWLTFGCARTVTVGFVAPTV and GLCVDLLVCVLLLALLLLELV.

Belongs to the HHV-5 US29 protein family.

It is found in the host membrane. This is an uncharacterized protein from Homo sapiens (Human).